The chain runs to 172 residues: Bifunctional protein PyrR (172 aa).

Substrate contacts are provided by residues 36 to 37, arginine 77, 94 to 102, and valine 151; these read TG and DDVLMSGRT. The short motif at 90–102 is the PRPP-binding element; the sequence is LVLVDDVLMSGRT.

The protein belongs to the purine/pyrimidine phosphoribosyltransferase family. PyrR subfamily.

The catalysed reaction is UMP + diphosphate = 5-phospho-alpha-D-ribose 1-diphosphate + uracil. Functionally, regulates the transcription of the pyrimidine nucleotide (pyr) operon in response to exogenous pyrimidines. In terms of biological role, also displays a weak uracil phosphoribosyltransferase activity which is not physiologically significant. The sequence is that of Bifunctional protein PyrR from Pseudomonas putida (Arthrobacter siderocapsulatus).